Consider the following 421-residue polypeptide: UPF0415 protein C7orf25 homolog (421 aa).

The protein belongs to the UPF0415 family.

This chain is UPF0415 protein C7orf25 homolog, found in Rattus norvegicus (Rat).